A 508-amino-acid polypeptide reads, in one-letter code: Photosystem II CP47 reaction center protein (508 aa).

The next 6 membrane-spanning stretches (helical) occupy residues 21 to 36 (SVHIMHTALVAGWAGS), 101 to 115 (IMFSGLMFLAAIWHW), 140 to 156 (GIHLFLSGVACFGFGAF), 203 to 218 (IAAGILGILAGLFHLS), 237 to 252 (VLSSSIAAVFFAAFIV), and 457 to 472 (TFALLFFSGHIWHGAR).

It belongs to the PsbB/PsbC family. PsbB subfamily. As to quaternary structure, PSII is composed of 1 copy each of membrane proteins PsbA, PsbB, PsbC, PsbD, PsbE, PsbF, PsbH, PsbI, PsbJ, PsbK, PsbL, PsbM, PsbT, PsbX, PsbY, PsbZ, Psb30/Ycf12, at least 3 peripheral proteins of the oxygen-evolving complex and a large number of cofactors. It forms dimeric complexes. Binds multiple chlorophylls. PSII binds additional chlorophylls, carotenoids and specific lipids. serves as cofactor.

It is found in the plastid. The protein localises to the chloroplast thylakoid membrane. Its function is as follows. One of the components of the core complex of photosystem II (PSII). It binds chlorophyll and helps catalyze the primary light-induced photochemical processes of PSII. PSII is a light-driven water:plastoquinone oxidoreductase, using light energy to abstract electrons from H(2)O, generating O(2) and a proton gradient subsequently used for ATP formation. The polypeptide is Photosystem II CP47 reaction center protein (Pinus koraiensis (Korean pine)).